The following is a 327-amino-acid chain: Undecaprenyl-phosphate 4-deoxy-4-formamido-L-arabinose transferase (327 aa).

2 helical membrane passes run 233-253 (ILSL…LLLI) and 268-288 (VFTL…GMGL).

The protein belongs to the glycosyltransferase 2 family.

Its subcellular location is the cell inner membrane. It catalyses the reaction UDP-4-deoxy-4-formamido-beta-L-arabinose + di-trans,octa-cis-undecaprenyl phosphate = 4-deoxy-4-formamido-alpha-L-arabinopyranosyl di-trans,octa-cis-undecaprenyl phosphate + UDP. The protein operates within glycolipid biosynthesis; 4-amino-4-deoxy-alpha-L-arabinose undecaprenyl phosphate biosynthesis; 4-amino-4-deoxy-alpha-L-arabinose undecaprenyl phosphate from UDP-4-deoxy-4-formamido-beta-L-arabinose and undecaprenyl phosphate: step 1/2. It participates in bacterial outer membrane biogenesis; lipopolysaccharide biosynthesis. In terms of biological role, catalyzes the transfer of 4-deoxy-4-formamido-L-arabinose from UDP to undecaprenyl phosphate. The modified arabinose is attached to lipid A and is required for resistance to polymyxin and cationic antimicrobial peptides. In Pectobacterium carotovorum subsp. carotovorum (strain PC1), this protein is Undecaprenyl-phosphate 4-deoxy-4-formamido-L-arabinose transferase.